A 103-amino-acid chain; its full sequence is Large ribosomal subunit protein bL21 (103 aa).

The protein belongs to the bacterial ribosomal protein bL21 family. As to quaternary structure, part of the 50S ribosomal subunit. Contacts protein L20.

Its function is as follows. This protein binds to 23S rRNA in the presence of protein L20. This chain is Large ribosomal subunit protein bL21, found in Albidiferax ferrireducens (strain ATCC BAA-621 / DSM 15236 / T118) (Rhodoferax ferrireducens).